We begin with the raw amino-acid sequence, 38 residues long: Large ribosomal subunit protein bL36 (38 aa).

This sequence belongs to the bacterial ribosomal protein bL36 family.

The sequence is that of Large ribosomal subunit protein bL36 from Stutzerimonas stutzeri (strain A1501) (Pseudomonas stutzeri).